Consider the following 499-residue polypeptide: Alpha-internexin (499 aa).

Positions 1–87 (MSFGSEHYLC…SQAAARTNEY (87 aa)) are head. Position 72 is a phosphoserine (S72). The tract at residues 88–129 (KIIRTNEKEQLQGLNDRFAVFIEKVHQLETQNRALEAELAAL) is coil 1A. An IF rod domain is found at 94–407 (EKEQLQGLND…KLLEGEETRF (314 aa)). Residues 130 to 142 (RQRHAEPSRVGEL) form a linker 1 region. The coil 1B stretch occupies residues 143-238 (FQRELRDLRA…QVHDEEVAEL (96 aa)). S219 carries the phosphoserine modification. Residues 239-262 (LATLQASSQAAAEVDVTVAKPDLT) are linker 2. The interval 263–408 (SALREIRAQY…LLEGEETRFS (146 aa)) is coil 2. N6-acetyllysine is present on K290. S335 is modified (phosphoserine). Residues 409 to 499 (TSGLSISGLN…EETTISSQKI (91 aa)) are tail. A disordered region spans residues 441 to 466 (STGLSLKKEEEEEEASKVASKKTSQI). Phosphoserine is present on residues S469 and S496.

This sequence belongs to the intermediate filament family. Forms homodimers (in vitro). Forms heterodimers with NEFL, NEFM or NEFH (in vitro). In terms of processing, O-glycosylated. Found predominantly in adult CNS.

In terms of biological role, class-IV neuronal intermediate filament that is able to self-assemble. It is involved in the morphogenesis of neurons. It may form an independent structural network without the involvement of other neurofilaments or it may cooperate with NEFL to form the filamentous backbone to which NEFM and NEFH attach to form the cross-bridges. May also cooperate with the neuronal intermediate filament protein PRPH to form filamentous networks. The chain is Alpha-internexin (INA) from Homo sapiens (Human).